The following is a 376-amino-acid chain: Chaperone protein DnaJ (376 aa).

The J domain maps to D5–G70. A CR-type zinc finger spans residues G132–D209. C145, C148, C161, C164, C183, C186, C197, and C200 together coordinate Zn(2+). CXXCXGXG motif repeat units follow at residues C145–G152, C161–G168, C183–G190, and C197–G204. Residues G223 to G242 are disordered.

The protein belongs to the DnaJ family. In terms of assembly, homodimer. The cofactor is Zn(2+).

Its subcellular location is the cytoplasm. Functionally, participates actively in the response to hyperosmotic and heat shock by preventing the aggregation of stress-denatured proteins and by disaggregating proteins, also in an autonomous, DnaK-independent fashion. Unfolded proteins bind initially to DnaJ; upon interaction with the DnaJ-bound protein, DnaK hydrolyzes its bound ATP, resulting in the formation of a stable complex. GrpE releases ADP from DnaK; ATP binding to DnaK triggers the release of the substrate protein, thus completing the reaction cycle. Several rounds of ATP-dependent interactions between DnaJ, DnaK and GrpE are required for fully efficient folding. Also involved, together with DnaK and GrpE, in the DNA replication of plasmids through activation of initiation proteins. This Stenotrophomonas maltophilia (strain R551-3) protein is Chaperone protein DnaJ.